The primary structure comprises 228 residues: Archaeal flagellar ATP-binding protein FlaH (228 aa).

ATP-binding residues include Gly-30, Thr-31, Lys-33, Ser-34, Val-35, Glu-57, and Lys-191. Ser-34 is a binding site for Mg(2+). Glu-57 contributes to the Mg(2+) binding site.

The protein belongs to the FlaH family. In terms of assembly, the S.acidocaldarius archaellum assembly machinery and its filament consist of seven proteins (FlaB, FlaF, FlaG, FlaH, FlaI, FlaJ and FlaX). Interacts directly with the FlaX ring and the motor ATPase FlaI. Monomers, which can probably form homohexamers upon binding to ATP. In vitro, FlaH assembles as a second ring inside the FlaX ring.

It localises to the archaeal flagellum. It is found in the cytoplasm. Its function is as follows. Component of the archaellum. FlaX, FlaH and FlaI form the core cytoplasmic motor complex of the crenarchaeal archaellum. FlaH binds ATP with high affinity but lacks detectable in vitro ATPase activity. ATP binding is essential for interaction with FlaI and for archaellum assembly. This Sulfolobus acidocaldarius (strain ATCC 33909 / DSM 639 / JCM 8929 / NBRC 15157 / NCIMB 11770) protein is Archaeal flagellar ATP-binding protein FlaH.